The chain runs to 219 residues: Probable glutathione S-transferase MSR-1 (219 aa).

The region spanning 4–83 (NNVVLLDFSG…YIDEVWHEKC (80 aa)) is the GST N-terminal domain. Residues serine 14, lysine 41, isoleucine 55, and 67–68 (ES) contribute to the glutathione site. Positions 89-208 (DPYQRSQARF…LPHPHKIYDF (120 aa)) constitute a GST C-terminal domain.

Belongs to the GST superfamily. HSP26 family.

It carries out the reaction RX + glutathione = an S-substituted glutathione + a halide anion + H(+). Functionally, may play an important role in hormonal and growth regulatory responses. The sequence is that of Probable glutathione S-transferase MSR-1 (MSR-1) from Nicotiana plumbaginifolia (Leadwort-leaved tobacco).